Reading from the N-terminus, the 199-residue chain is 5'-deoxynucleotidase YfbR (199 aa).

Residues 18-19 (RW) and H33 contribute to the substrate site. One can recognise an HD domain in the interval 30–142 (VSEHSLQVAM…VKQADALCAY (113 aa)). The a divalent metal cation site is built by H33, H68, and D69. Residues D69, 77-80 (DLPT), and D137 contribute to the substrate site. Residue D137 participates in a divalent metal cation binding.

The protein belongs to the 5DNU family. Homodimer. It depends on a divalent metal cation as a cofactor.

The protein localises to the cytoplasm. It carries out the reaction a 2'-deoxyribonucleoside 5'-phosphate + H2O = a 2'-deoxyribonucleoside + phosphate. Its function is as follows. Catalyzes the strictly specific dephosphorylation of 2'-deoxyribonucleoside 5'-monophosphates. This chain is 5'-deoxynucleotidase YfbR, found in Escherichia coli (strain K12 / MC4100 / BW2952).